Reading from the N-terminus, the 916-residue chain is Rab3 GTPase-activating protein catalytic subunit (916 aa).

The tract at residues 530–574 is disordered; it reads NSKRKSEGMVGKASSEEEEDEDDDEGEFFDCDDLTAGAGSPTKAV. 2 positions are modified to phosphoserine: S543 and S544. Residues 545–562 are compositionally biased toward acidic residues; the sequence is EEEEDEDDDEGEFFDCDD.

It belongs to the Rab3-GAP catalytic subunit family. The Rab3 GTPase-activating complex is a heterodimer composed of Rab3GAP1 and Rab3-GAP.

It is found in the cytoplasm. In terms of biological role, catalytic subunit of the Rab3 GTPase-activating (Rab3GAP) complex composed of Rab3-GAP and Rab3GAP1, which has both GTPase-activating protein (GAP) activity towards Rab3, and guanine nucleotide exchange factor (GEF) activity towards Rab18. As part of the Rab3GAP complex, required for the rapid induction and sustained expression of synaptic homeostasis at the neuromuscular junction (NMJ). Also participates in the regulation of autophagy in tissues such as larval fat cells and adult muscles. The Rab3GAP complex, acts as a GAP for Rab3 by converting active Rab3-GTP to the inactive form Rab3-GDP. At the neuromuscular junction (NMJ), forms a presynaptic signaling mechanism with Rab3 that regulates progression of synaptic homeostasis at a late stage of vesicle release. Within this mechanism Rab3-GTP acts, directly or indirectly, to inhibit the progression of synaptic homeostasis, and Rab3-GAP functions to inactivate this action of Rab3-GTP. The Rab3GAP complex, acts as a GEF for Rab18 by promoting the conversion of inactive Rab18-GDP to the active form Rab18-GTP. Regulates autophagy as part of a Rab3GAP-Rab18 module. Once Rab18 is activated by the GEF Rab3GAP complex, the Rab3GAP-Rab18 module localizes to autophagosomes, and regulates autolysosome formation and maturation together with the Rab18 interacting effector, the PI3K/Vps34 Complex I. This Drosophila melanogaster (Fruit fly) protein is Rab3 GTPase-activating protein catalytic subunit.